Consider the following 258-residue polypeptide: Hemin import ATP-binding protein HmuV (258 aa).

Residues 1–238 (MLDIDVSNLS…DILERTYRTP (238 aa)) enclose the ABC transporter domain. 34-41 (GENGAGKS) lines the ATP pocket.

Belongs to the ABC transporter superfamily. Heme (hemin) importer (TC 3.A.1.14.5) family. The complex is composed of two ATP-binding proteins (HmuV), two transmembrane proteins (HmuU) and a solute-binding protein (HmuT).

The protein resides in the cell inner membrane. Part of the ABC transporter complex HmuTUV involved in hemin import. Responsible for energy coupling to the transport system. This chain is Hemin import ATP-binding protein HmuV, found in Idiomarina loihiensis (strain ATCC BAA-735 / DSM 15497 / L2-TR).